A 270-amino-acid polypeptide reads, in one-letter code: Dermonecrotic toxin LhSicTox-alphaIA2aiii (270 aa).

The active site involves histidine 2. Residues glutamate 22 and aspartate 24 each contribute to the Mg(2+) site. The active-site Nucleophile is histidine 38. 2 disulfide bridges follow: cysteine 42–cysteine 48 and cysteine 44–cysteine 187. Aspartate 82 lines the Mg(2+) pocket.

Belongs to the arthropod phospholipase D family. Class II subfamily. Mg(2+) is required as a cofactor. As to expression, expressed by the venom gland.

It localises to the secreted. It carries out the reaction an N-(acyl)-sphingosylphosphocholine = an N-(acyl)-sphingosyl-1,3-cyclic phosphate + choline. The enzyme catalyses an N-(acyl)-sphingosylphosphoethanolamine = an N-(acyl)-sphingosyl-1,3-cyclic phosphate + ethanolamine. The catalysed reaction is a 1-acyl-sn-glycero-3-phosphocholine = a 1-acyl-sn-glycero-2,3-cyclic phosphate + choline. It catalyses the reaction a 1-acyl-sn-glycero-3-phosphoethanolamine = a 1-acyl-sn-glycero-2,3-cyclic phosphate + ethanolamine. Functionally, dermonecrotic toxins cleave the phosphodiester linkage between the phosphate and headgroup of certain phospholipids (sphingolipid and lysolipid substrates), forming an alcohol (often choline) and a cyclic phosphate. This toxin acts on sphingomyelin (SM). It may also act on ceramide phosphoethanolamine (CPE), lysophosphatidylcholine (LPC) and lysophosphatidylethanolamine (LPE), but not on lysophosphatidylserine (LPS), and lysophosphatidylglycerol (LPG). It acts by transphosphatidylation, releasing exclusively cyclic phosphate products as second products. Induces dermonecrosis, hemolysis, increased vascular permeability, edema, inflammatory response, and platelet aggregation. This Loxosceles hirsuta (Recluse spider) protein is Dermonecrotic toxin LhSicTox-alphaIA2aiii.